We begin with the raw amino-acid sequence, 552 residues long: Putative transport protein NT01EI_3867 (552 aa).

Transmembrane regions (helical) follow at residues 4–24 (IALT…IGNW), 26–46 (IYGV…VGHF), 65–85 (FGLI…FFSS), 90–112 (GLRL…AAIH), and 158–178 (MGYA…IWLI). RCK C-terminal domains follow at residues 191-276 (RDFD…VIGE) and 279-361 (DTSL…IVGN). Helical transmembrane passes span 371-391 (MLPV…PLFI), 403-425 (AGGP…LYWF), 439-459 (IVLF…DTLL), 464-484 (VTWI…AALL), 493-513 (YLTL…LAFA), and 530-550 (VYPL…LLFW).

It belongs to the AAE transporter (TC 2.A.81) family. YidE subfamily.

It localises to the cell membrane. The polypeptide is Putative transport protein NT01EI_3867 (Edwardsiella ictaluri (strain 93-146)).